The chain runs to 286 residues: Nucleotide-binding protein HAPS_0087 (286 aa).

Residue Gly-8–Ser-15 participates in ATP binding. Asp-56–Asn-59 serves as a coordination point for GTP.

It belongs to the RapZ-like family.

Its function is as follows. Displays ATPase and GTPase activities. The sequence is that of Nucleotide-binding protein HAPS_0087 from Glaesserella parasuis serovar 5 (strain SH0165) (Haemophilus parasuis).